The primary structure comprises 857 residues: Bifunctional levopimaradiene synthase, chloroplastic (857 aa).

Residues 1–33 (MALPSSSLSSQIHTGATTQCIPHFHGSLNAGTS) constitute a chloroplast transit peptide. Residue K257 participates in substrate binding. 2 residues coordinate Mg(2+): D390 and D392. The short motif at 390 to 393 (DIDD) is the DXDD motif element. K477 serves as a coordination point for substrate. The Mg(2+) site is built by D609, D613, N753, T757, and E761. A DDXXD motif motif is present at residues 609-613 (DDLYD).

It belongs to the terpene synthase family. Tpsd subfamily. Mg(2+) serves as cofactor.

The protein resides in the plastid. It is found in the chloroplast. It catalyses the reaction (2E,6E,10E)-geranylgeranyl diphosphate = (+)-copalyl diphosphate. The catalysed reaction is (+)-copalyl diphosphate = abieta-7,13-diene + diphosphate. The enzyme catalyses (+)-copalyl diphosphate = abieta-8(14),12-diene + diphosphate. It carries out the reaction (+)-copalyl diphosphate = neoabietadiene + diphosphate. It functions in the pathway terpene metabolism; oleoresin biosynthesis. Involved in defensive oleoresin formation in conifers in response to insect attack or other injury. Involved in diterpene (C20) olefins biosynthesis. Bifunctional enzyme that catalyzes two sequential cyclizations of geranylgeranyl diphosphate (GGPP) to levopimaradiene. Levopimaradiene is the major products of the enzyme with abietadiene and neoabietadiene. No activity with farnesyl diphosphate (FPP) as substrate. The protein is Bifunctional levopimaradiene synthase, chloroplastic of Pinus contorta (Shore pine).